Reading from the N-terminus, the 202-residue chain is Matrix protein (202 aa).

Residues 35–38 (PPEY) carry the PPXY motif motif. An essential for glycoprotein binding region spans residues 115-151 (KLRRTLIFQWADSRGPLEGEELEYSQEITWDDDTEFV).

Belongs to the lyssavirus matrix protein family. As to quaternary structure, homomultimer. Interacts with nucleoprotein and with the cytoplasmic domain of glycoprotein. Interacts with host ATP6V1A; this interaction plays an important role in virion uncoating after viral entry.

It is found in the virion membrane. It localises to the host endomembrane system. The protein resides in the host cytoplasm. Its function is as follows. Plays a major role in assembly, budding and uncoating of virion after membrane fusion. Completely covers the ribonucleoprotein coil and keep it in condensed bullet-shaped form. Inhibits viral transcription and stimulates replication. Plays a major role in early induction of TRAIL-mediated apoptosis in infected neurons. Inhibits the integrated stress response (ISR) in the infected cell by blocking the formation of stress granules. This Rabies virus (strain CVS-11) (RABV) protein is Matrix protein (M).